The primary structure comprises 268 residues: Glutamine amidotransferase-like class 1 domain-containing protein 3, mitochondrial (268 aa).

The N-terminal 41 residues, 1-41 (MAAVRVLVASRLAAASAFTSLSPGGRTPSQRAALHLSVPRP), are a transit peptide targeting the mitochondrion. N6-acetyllysine is present on residues Lys-151, Lys-157, and Lys-164. Lys-203 is subject to N6-acetyllysine; alternate. Lys-203 carries the post-translational modification N6-succinyllysine; alternate. Residue Lys-219 is modified to N6-acetyllysine. N6-acetyllysine; alternate is present on residues Lys-223 and Lys-233. An N6-succinyllysine; alternate mark is found at Lys-223 and Lys-233.

The protein belongs to the GATD3 family.

It is found in the mitochondrion. The polypeptide is Glutamine amidotransferase-like class 1 domain-containing protein 3, mitochondrial (Homo sapiens (Human)).